The chain runs to 316 residues: MAKERHSVGVIGAPFSKGQPRRGVEEGPKYLREAGLIEKLREFGNDVRDCGDLDFPDVPNDTPFNNVKNPRTVGKATEILANAVTAVKKADKTCQSIGGDHSLAVGTIAGHAAVHPNLCVVWVDAHADINTPSTSPCGNLHGQPLSFLMKELKAKMPAVPGFEWVKPCLRSKDIVYIGLRDVDPGEHYILKTLGIKYLSMIEVDYLKDDKVMEETLEYLVGKHKRPIHLSFDIDGLDPSIAPATGTPCPGGRTYREGRILHEQLHKTGLLSGVDTIWMESTSRGETKRDVEVTVKTALDMTLSCFGKAREGFHAST.

Residues methionine 1–glutamate 26 form a disordered region. Mn(2+) is bound by residues histidine 101, aspartate 124, histidine 126, and aspartate 128. Residues histidine 126–asparagine 130, cysteine 137–asparagine 139, and aspartate 183 contribute to the substrate site. 2 residues coordinate Mn(2+): aspartate 232 and aspartate 234. Threonine 246 contacts substrate.

This sequence belongs to the arginase family. As to quaternary structure, homotrimer. Mn(2+) serves as cofactor. In terms of tissue distribution, strongest expression in liver.

The enzyme catalyses L-arginine + H2O = urea + L-ornithine. The protein operates within nitrogen metabolism; urea cycle; L-ornithine and urea from L-arginine: step 1/1. The protein is Arginase-1 (arg1) of Xenopus laevis (African clawed frog).